Consider the following 320-residue polypeptide: Cytochrome c biogenesis protein CcsA (320 aa).

8 helical membrane-spanning segments follow: residues 9 to 29, 36 to 56, 70 to 90, 97 to 117, 143 to 163, 227 to 247, 254 to 274, and 288 to 308; these read ILAH…WGTL, LSSS…GLLI, LYES…LLEV, WLGA…TLGL, ILFS…LLVI, AIGL…IWAN, WSWD…AIYL, and AIVA…VNLL.

It belongs to the CcmF/CycK/Ccl1/NrfE/CcsA family. As to quaternary structure, may interact with Ccs1.

It is found in the plastid. The protein resides in the chloroplast thylakoid membrane. In terms of biological role, required during biogenesis of c-type cytochromes (cytochrome c6 and cytochrome f) at the step of heme attachment. This is Cytochrome c biogenesis protein CcsA from Pinus thunbergii (Japanese black pine).